The chain runs to 330 residues: Putative aminopeptidase (330 aa).

The a divalent metal cation site is built by His65 and Asp168. Glu198 (proton acceptor) is an active-site residue. A divalent metal cation is bound by residues Glu199, Asp221, and His307.

Belongs to the peptidase M42 family. A divalent metal cation is required as a cofactor.

The chain is Putative aminopeptidase (celM) from Acetivibrio thermocellus (Hungateiclostridium thermocellum).